A 175-amino-acid chain; its full sequence is UPF0398 protein SGO_0588 (175 aa).

The protein belongs to the UPF0398 family.

This Streptococcus gordonii (strain Challis / ATCC 35105 / BCRC 15272 / CH1 / DL1 / V288) protein is UPF0398 protein SGO_0588.